The sequence spans 284 residues: Proteasome subunit beta (284 aa).

Positions 1-56 (MSPMESSSTRFPGQALPAAYLTPGSSSFTDFLRVAAPELMPGSRPVPDGAVEAPHG) are cleaved as a propeptide — removed in mature form; by autocatalysis. The active-site Nucleophile is the T57.

Belongs to the peptidase T1B family. As to quaternary structure, the 20S proteasome core is composed of 14 alpha and 14 beta subunits that assemble into four stacked heptameric rings, resulting in a barrel-shaped structure. The two inner rings, each composed of seven catalytic beta subunits, are sandwiched by two outer rings, each composed of seven alpha subunits. The catalytic chamber with the active sites is on the inside of the barrel. Has a gated structure, the ends of the cylinder being occluded by the N-termini of the alpha-subunits. Is capped by the proteasome-associated ATPase, ARC.

It localises to the cytoplasm. It carries out the reaction Cleavage of peptide bonds with very broad specificity.. The protein operates within protein degradation; proteasomal Pup-dependent pathway. With respect to regulation, the formation of the proteasomal ATPase ARC-20S proteasome complex, likely via the docking of the C-termini of ARC into the intersubunit pockets in the alpha-rings, may trigger opening of the gate for substrate entry. Interconversion between the open-gate and close-gate conformations leads to a dynamic regulation of the 20S proteasome proteolysis activity. In terms of biological role, component of the proteasome core, a large protease complex with broad specificity involved in protein degradation. The protein is Proteasome subunit beta of Saccharopolyspora erythraea (strain ATCC 11635 / DSM 40517 / JCM 4748 / NBRC 13426 / NCIMB 8594 / NRRL 2338).